The sequence spans 899 residues: Calcium-transporting ATPase 1 (899 aa).

Transmembrane regions (helical) follow at residues 59–79, 80–100, 247–267, and 282–302; these read FVKD…VTLG, NIDD…VGFV, QLSL…FFQG, and VAAI…LGVL. D329 functions as the 4-aspartylphosphate intermediate in the catalytic mechanism. 4 helical membrane-spanning segments follow: residues 688–708, 757–777, 827–847, and 854–874; these read FQLS…VFGF, QLLQ…IVVF, FNIA…ASPF, and EAIG…VLWV. S892 bears the Phosphoserine mark.

This sequence belongs to the cation transport ATPase (P-type) (TC 3.A.3) family.

It localises to the endoplasmic reticulum membrane. It catalyses the reaction Ca(2+)(in) + ATP + H2O = Ca(2+)(out) + ADP + phosphate + H(+). Its function is as follows. Transports calcium and manganese ions into the cell. Regulates cell morphogenesis through control of manganese and calcium homeostasis. The chain is Calcium-transporting ATPase 1 (pmr1) from Schizosaccharomyces pombe (strain 972 / ATCC 24843) (Fission yeast).